Here is a 340-residue protein sequence, read N- to C-terminus: Ketol-acid reductoisomerase (NADP(+)) (340 aa).

The region spanning 3-183 (VSIYYDKDCD…GGGRTGIIET (181 aa)) is the KARI N-terminal Rossmann domain. NADP(+) contacts are provided by residues 26–29 (FGSQ), Lys-49, Ser-54, and 84–87 (DEIQ). His-109 is an active-site residue. Gly-135 lines the NADP(+) pocket. Residues 184–329 (TFKAETETDL…RELRAMMPWI (146 aa)) form the KARI C-terminal knotted domain. Residues Asp-192, Glu-196, Glu-228, and Glu-232 each coordinate Mg(2+). Position 253 (Ser-253) interacts with substrate.

It belongs to the ketol-acid reductoisomerase family. Requires Mg(2+) as cofactor.

It carries out the reaction (2R)-2,3-dihydroxy-3-methylbutanoate + NADP(+) = (2S)-2-acetolactate + NADPH + H(+). The catalysed reaction is (2R,3R)-2,3-dihydroxy-3-methylpentanoate + NADP(+) = (S)-2-ethyl-2-hydroxy-3-oxobutanoate + NADPH + H(+). Its pathway is amino-acid biosynthesis; L-isoleucine biosynthesis; L-isoleucine from 2-oxobutanoate: step 2/4. It participates in amino-acid biosynthesis; L-valine biosynthesis; L-valine from pyruvate: step 2/4. Its function is as follows. Involved in the biosynthesis of branched-chain amino acids (BCAA). Catalyzes an alkyl-migration followed by a ketol-acid reduction of (S)-2-acetolactate (S2AL) to yield (R)-2,3-dihydroxy-isovalerate. In the isomerase reaction, S2AL is rearranged via a Mg-dependent methyl migration to produce 3-hydroxy-3-methyl-2-ketobutyrate (HMKB). In the reductase reaction, this 2-ketoacid undergoes a metal-dependent reduction by NADPH to yield (R)-2,3-dihydroxy-isovalerate. This is Ketol-acid reductoisomerase (NADP(+)) from Campylobacter lari (strain RM2100 / D67 / ATCC BAA-1060).